Reading from the N-terminus, the 155-residue chain is Large-conductance mechanosensitive channel (155 aa).

A run of 2 helical transmembrane segments spans residues 25 to 45 and 98 to 118; these read VLDLAVGVIIGGAFGKIVTSL and GDFITQAVNFVIVAFIIFLIV.

Belongs to the MscL family. As to quaternary structure, homopentamer.

Its subcellular location is the cell inner membrane. Its function is as follows. Channel that opens in response to stretch forces in the membrane lipid bilayer. May participate in the regulation of osmotic pressure changes within the cell. The chain is Large-conductance mechanosensitive channel from Novosphingobium aromaticivorans (strain ATCC 700278 / DSM 12444 / CCUG 56034 / CIP 105152 / NBRC 16084 / F199).